We begin with the raw amino-acid sequence, 339 residues long: MRVYYDRDADVNLIKGKKVAVVGYGSQGHAHVLNLRDSGVTEVCVALREGSPSAKKATGQGLVVKTPAEAAAWADVVMILTPDELQGDLYKDHLHANMKQGAALAFAHGLNIHFALIEPRPDLDVFMIAPKGPGHTVRSEYVRGGGVPCLVAVAQDASGNAMEIALSYASAIGGGRSGIIETTFREECETDLFGEQAVLCGGLTELIKNGFETLVEAGYAPEMAYFECLHEVKLIVDLMYEGGMANMRYSISNTAEYGDYVTGPRIVTPETKAEMKRVLDDIQSGRFVRDWMIECKAGQPSFKATRRRNAEHQIEEVGGRLRAMMPWIAANRLVDKDKN.

Positions 1–182 constitute a KARI N-terminal Rossmann domain; sequence MRVYYDRDAD…GGGRSGIIET (182 aa). NADP(+)-binding positions include 24-27, Arg48, Ser51, Ser53, and 83-86; these read YGSQ and DELQ. Residue His108 is part of the active site. An NADP(+)-binding site is contributed by Gly134. One can recognise a KARI C-terminal knotted domain in the interval 183 to 328; the sequence is TFREECETDL…GRLRAMMPWI (146 aa). 4 residues coordinate Mg(2+): Asp191, Glu195, Glu227, and Glu231. Residue Ser252 coordinates substrate.

Belongs to the ketol-acid reductoisomerase family. Requires Mg(2+) as cofactor.

The enzyme catalyses (2R)-2,3-dihydroxy-3-methylbutanoate + NADP(+) = (2S)-2-acetolactate + NADPH + H(+). It carries out the reaction (2R,3R)-2,3-dihydroxy-3-methylpentanoate + NADP(+) = (S)-2-ethyl-2-hydroxy-3-oxobutanoate + NADPH + H(+). Its pathway is amino-acid biosynthesis; L-isoleucine biosynthesis; L-isoleucine from 2-oxobutanoate: step 2/4. It participates in amino-acid biosynthesis; L-valine biosynthesis; L-valine from pyruvate: step 2/4. In terms of biological role, involved in the biosynthesis of branched-chain amino acids (BCAA). Catalyzes an alkyl-migration followed by a ketol-acid reduction of (S)-2-acetolactate (S2AL) to yield (R)-2,3-dihydroxy-isovalerate. In the isomerase reaction, S2AL is rearranged via a Mg-dependent methyl migration to produce 3-hydroxy-3-methyl-2-ketobutyrate (HMKB). In the reductase reaction, this 2-ketoacid undergoes a metal-dependent reduction by NADPH to yield (R)-2,3-dihydroxy-isovalerate. This Rhodospirillum rubrum (strain ATCC 11170 / ATH 1.1.1 / DSM 467 / LMG 4362 / NCIMB 8255 / S1) protein is Ketol-acid reductoisomerase (NADP(+)).